The following is a 204-amino-acid chain: uncharacterized protein (204 aa).

Residues 63–83 (SLLLSMVASVTAAGGNAAIVG) form a helical membrane-spanning segment.

It localises to the membrane. This is an uncharacterized protein from Mycobacterium tuberculosis (strain ATCC 25618 / H37Rv).